We begin with the raw amino-acid sequence, 353 residues long: Basic membrane protein C (353 aa).

The signal sequence occupies residues 1–16 (MFKRFIFITLSLLVFA). The N-palmitoyl cysteine moiety is linked to residue cysteine 17. Cysteine 17 carries the S-diacylglycerol cysteine lipid modification.

This sequence belongs to the BMP lipoprotein family. As to quaternary structure, monomer.

The protein resides in the cell inner membrane. In terms of biological role, may be part of an ABC-type nucleoside uptake system involved in the purine salvage pathway. The polypeptide is Basic membrane protein C (bmpC) (Borreliella burgdorferi (strain N40) (Borrelia burgdorferi)).